The sequence spans 370 residues: Putative agmatine deiminase (370 aa).

Cys361 serves as the catalytic Amidino-cysteine intermediate.

The protein belongs to the agmatine deiminase family.

The catalysed reaction is agmatine + H2O = N-carbamoylputrescine + NH4(+). This Shewanella putrefaciens (strain CN-32 / ATCC BAA-453) protein is Putative agmatine deiminase.